Here is a 393-residue protein sequence, read N- to C-terminus: Tryptophan synthase beta chain (393 aa).

K85 bears the N6-(pyridoxal phosphate)lysine mark.

This sequence belongs to the TrpB family. As to quaternary structure, tetramer of two alpha and two beta chains. Pyridoxal 5'-phosphate is required as a cofactor.

It carries out the reaction (1S,2R)-1-C-(indol-3-yl)glycerol 3-phosphate + L-serine = D-glyceraldehyde 3-phosphate + L-tryptophan + H2O. Its pathway is amino-acid biosynthesis; L-tryptophan biosynthesis; L-tryptophan from chorismate: step 5/5. The beta subunit is responsible for the synthesis of L-tryptophan from indole and L-serine. The polypeptide is Tryptophan synthase beta chain (trpB) (Helicobacter pylori (strain J99 / ATCC 700824) (Campylobacter pylori J99)).